Reading from the N-terminus, the 184-residue chain is UPF0149 protein PputW619_5026 (184 aa).

This sequence belongs to the UPF0149 family.

This Pseudomonas putida (strain W619) protein is UPF0149 protein PputW619_5026.